Reading from the N-terminus, the 340-residue chain is Ketol-acid reductoisomerase (NADP(+)) (340 aa).

The KARI N-terminal Rossmann domain occupies 1 to 183 (MAITVYYDKD…GGGRTGIIET (183 aa)). NADP(+) contacts are provided by residues 26 to 29 (FGSQ), Arg-49, Ser-52, Ser-54, and 84 to 87 (DEIQ). Residue His-109 is part of the active site. Gly-135 provides a ligand contact to NADP(+). The KARI C-terminal knotted domain maps to 184 to 329 (TFKAETETDL…RNLRAMMPWI (146 aa)). The Mg(2+) site is built by Asp-192, Glu-196, Glu-228, and Glu-232. Residue Ser-253 participates in substrate binding.

The protein belongs to the ketol-acid reductoisomerase family. Mg(2+) serves as cofactor.

The catalysed reaction is (2R)-2,3-dihydroxy-3-methylbutanoate + NADP(+) = (2S)-2-acetolactate + NADPH + H(+). The enzyme catalyses (2R,3R)-2,3-dihydroxy-3-methylpentanoate + NADP(+) = (S)-2-ethyl-2-hydroxy-3-oxobutanoate + NADPH + H(+). Its pathway is amino-acid biosynthesis; L-isoleucine biosynthesis; L-isoleucine from 2-oxobutanoate: step 2/4. It participates in amino-acid biosynthesis; L-valine biosynthesis; L-valine from pyruvate: step 2/4. Functionally, involved in the biosynthesis of branched-chain amino acids (BCAA). Catalyzes an alkyl-migration followed by a ketol-acid reduction of (S)-2-acetolactate (S2AL) to yield (R)-2,3-dihydroxy-isovalerate. In the isomerase reaction, S2AL is rearranged via a Mg-dependent methyl migration to produce 3-hydroxy-3-methyl-2-ketobutyrate (HMKB). In the reductase reaction, this 2-ketoacid undergoes a metal-dependent reduction by NADPH to yield (R)-2,3-dihydroxy-isovalerate. The polypeptide is Ketol-acid reductoisomerase (NADP(+)) (Campylobacter jejuni (strain RM1221)).